The primary structure comprises 511 residues: Probable endopeptidase p60 (511 aa).

The signal sequence occupies residues 1–27 (MNMKKATIVSAAGIAVTAFAAPSVVSA). The 44-residue stretch at 28–71 (NTVVVASGDTLWGIASKTGTTVDQLKQLNKLDSDRIVPGQKLTI) folds into the LysM 1 domain. Residues 78 to 142 (KVEKSVSATW…VNGKYLSDAK (65 aa)) form the SH3b domain. The region spanning 175–218 (STYKVKSGDTIWALSVKYGVPVQKLIEWNNLSSSSIYVGQTIAV) is the LysM 2 domain. Low complexity-rich tracts occupy residues 229–257 (TVKQ…QAKP) and 264–282 (KPAV…AKPA). Residues 229 to 291 (TVKQAAPAKV…AVEQKASTPA (63 aa)) are disordered. Positions 297–341 (ATYKVQNGDSLGKIASLFKVSVADLTNWNNLNATITIYAGQELSV) constitute a LysM 3 domain. Low complexity-rich tracts occupy residues 347-362 (KPKP…SKPA) and 372-390 (TNTT…NTSQ). The interval 347–390 (KPKPAAPAKPAVSKPATSTPAKVTPTNTTNNSTPTTNVNNNTSQ) is disordered. Positions 393–511 (SASFSALYAE…GQYLVGFGRV (119 aa)) constitute a NlpC/P60 domain. The Nucleophile role is filled by C423. The Proton acceptor role is filled by H473. D485 is an active-site residue.

The protein belongs to the peptidase C40 family.

Functionally, this major extracellular protein may be involved in the invasion of non-professional phagocytic cells by Listeria. The chain is Probable endopeptidase p60 (iap) from Listeria grayi (Listeria murrayi).